Consider the following 598-residue polypeptide: Nuclear receptor subfamily 4 group A member 2 (598 aa).

The tract at residues 1–22 (MPCVQAQYGSSPQGASPASQSY) is disordered. Over residues 8 to 22 (YGSSPQGASPASQSY) the composition is skewed to low complexity. The segment at residues 260 to 335 (EGLCAVCGDN…VGMVKEVVRT (76 aa)) is a DNA-binding region (nuclear receptor). NR C4-type zinc fingers lie at residues 263 to 283 (CAVC…CEGC) and 299 to 323 (CLAN…FQKC). The Bipartite nuclear localization signal (NLS1) motif lies at 287–314 (FKRTVQKNAKYVCLANKNCPVDKRRRNR). A disordered region spans residues 337–361 (SLKGRRGRLPSKPKSPQDPSPPSPP). Positions 338-350 (LKGRRGRLPSKPK) match the Nuclear localization signal (NLS1) motif. Pro residues predominate over residues 352-361 (PQDPSPPSPP). Residues 360-595 (PPVSLISALV…AIIDKLFLDT (236 aa)) form the NR LBD domain. The nuclear export sequence (NES1) motif lies at 443 to 452 (FLELFVLRLA). The short motif at 568-577 (QGLQRIFYLK) is the nuclear export sequence (NES2) element.

The protein belongs to the nuclear hormone receptor family. NR4 subfamily. Interacts with SFPQ, NCOR2, SIN3A and HADC1. The interaction with NCOR2 increases in the absence of PITX3. Interacts with PER2. Brain.

Its subcellular location is the cytoplasm. It is found in the nucleus. Functionally, transcriptional regulator which is important for the differentiation and maintenance of meso-diencephalic dopaminergic (mdDA) neurons during development. It is crucial for expression of a set of genes such as SLC6A3, SLC18A2, TH and DRD2 which are essential for development of mdDA neurons. This chain is Nuclear receptor subfamily 4 group A member 2 (Nr4a2), found in Mus musculus (Mouse).